Consider the following 323-residue polypeptide: MIEFGDFYRLIAKGPLSPWLDTLPAQLSAWQRESLHGKFKTWFNAVEHLPQLTPTTLDLHSGVRAEMSPPISAGQREGMENMLRALMPWRKGPFSLYGLDIDTEWRSDWKWQRVLPHISPLAGRTILDVGCGSGYHLWRMIGEGAHLAVGIDPMQLFLCQFEAIRKLLGGDQRAHVLPLGIEQLPELAAFDAVFSMGVLYHRRSPLDHLYQLKNQLVTDGELVLETLVVEGDSQQVLVPGDRYAQMRNVYFIPSAPALKAWLEKCGFVDVRIADMAVTTTEEQRRTDWMTSESLAEFLDPHDHSKTVEGYPAPLRAVLIARKP.

Carboxy-S-adenosyl-L-methionine is bound by residues Lys-91, Trp-105, Lys-110, Gly-130, 181–182 (IE), Met-196, Tyr-200, and Arg-315.

Belongs to the class I-like SAM-binding methyltransferase superfamily. CmoB family. As to quaternary structure, homotetramer.

It carries out the reaction carboxy-S-adenosyl-L-methionine + 5-hydroxyuridine(34) in tRNA = 5-carboxymethoxyuridine(34) in tRNA + S-adenosyl-L-homocysteine + H(+). Catalyzes carboxymethyl transfer from carboxy-S-adenosyl-L-methionine (Cx-SAM) to 5-hydroxyuridine (ho5U) to form 5-carboxymethoxyuridine (cmo5U) at position 34 in tRNAs. The chain is tRNA U34 carboxymethyltransferase from Yersinia pseudotuberculosis serotype O:1b (strain IP 31758).